A 501-amino-acid polypeptide reads, in one-letter code: Glycerol kinase (501 aa).

T14 serves as a coordination point for ADP. Positions 14, 15, and 16 each coordinate ATP. T14 is a sn-glycerol 3-phosphate binding site. R18 provides a ligand contact to ADP. Residues R84, E85, Y136, and D246 each coordinate sn-glycerol 3-phosphate. Positions 84, 85, 136, 246, and 247 each coordinate glycerol. ADP contacts are provided by T268 and G311. ATP is bound by residues T268, G311, Q315, and G412. Residues G412 and N416 each coordinate ADP.

Belongs to the FGGY kinase family. In terms of assembly, homotetramer and homodimer (in equilibrium).

The catalysed reaction is glycerol + ATP = sn-glycerol 3-phosphate + ADP + H(+). It functions in the pathway polyol metabolism; glycerol degradation via glycerol kinase pathway; sn-glycerol 3-phosphate from glycerol: step 1/1. With respect to regulation, activated by phosphorylation and inhibited by fructose 1,6-bisphosphate (FBP). Key enzyme in the regulation of glycerol uptake and metabolism. Catalyzes the phosphorylation of glycerol to yield sn-glycerol 3-phosphate. This Desulforamulus reducens (strain ATCC BAA-1160 / DSM 100696 / MI-1) (Desulfotomaculum reducens) protein is Glycerol kinase.